The chain runs to 98 residues: NADH-ubiquinone oxidoreductase chain 4L (98 aa).

3 helical membrane passes run 1-21 (MTMVYANIFLAFITSLMGLLM), 29-49 (SLLCLEGMMLSLFVMMTITIL), and 61-81 (IILLVFAACEAALGLSLLVMV).

The protein belongs to the complex I subunit 4L family. As to quaternary structure, core subunit of respiratory chain NADH dehydrogenase (Complex I) which is composed of 45 different subunits.

It localises to the mitochondrion inner membrane. The enzyme catalyses a ubiquinone + NADH + 5 H(+)(in) = a ubiquinol + NAD(+) + 4 H(+)(out). In terms of biological role, core subunit of the mitochondrial membrane respiratory chain NADH dehydrogenase (Complex I) which catalyzes electron transfer from NADH through the respiratory chain, using ubiquinone as an electron acceptor. Part of the enzyme membrane arm which is embedded in the lipid bilayer and involved in proton translocation. The sequence is that of NADH-ubiquinone oxidoreductase chain 4L (MT-ND4L) from Ommatophoca rossii (Ross seal).